A 294-amino-acid polypeptide reads, in one-letter code: tRNA pseudouridine synthase B (294 aa).

Residue aspartate 38 is the Nucleophile of the active site.

It belongs to the pseudouridine synthase TruB family. Type 1 subfamily.

The enzyme catalyses uridine(55) in tRNA = pseudouridine(55) in tRNA. Functionally, responsible for synthesis of pseudouridine from uracil-55 in the psi GC loop of transfer RNAs. This Clostridium perfringens (strain ATCC 13124 / DSM 756 / JCM 1290 / NCIMB 6125 / NCTC 8237 / Type A) protein is tRNA pseudouridine synthase B.